The primary structure comprises 391 residues: Testis-expressed protein 9 (391 aa).

2 disordered regions span residues 1–31 (MAGR…PGPD) and 65–85 (QEVR…EDDY). The stretch at 188 to 351 (IGTEAQIRFL…EKQKGELMIG (164 aa)) forms a coiled coil.

The protein localises to the cytoplasm. The protein resides in the cytoskeleton. Its subcellular location is the microtubule organizing center. It is found in the centrosome. It localises to the centriolar satellite. In Homo sapiens (Human), this protein is Testis-expressed protein 9 (TEX9).